A 285-amino-acid polypeptide reads, in one-letter code: 3-methyl-2-oxobutanoate hydroxymethyltransferase (285 aa).

The interval 1 to 23 (MSEHNVYGAAQPAQPAQPAQPRT) is disordered. Over residues 9-21 (AAQPAQPAQPAQP) the composition is skewed to low complexity. Residues D66 and D105 each coordinate Mg(2+). 3-methyl-2-oxobutanoate-binding positions include 66–67 (DS), D105, and K135. E137 is a Mg(2+) binding site. E203 (proton acceptor) is an active-site residue.

It belongs to the PanB family. In terms of assembly, homodecamer; pentamer of dimers. The cofactor is Mg(2+).

The protein localises to the cytoplasm. It catalyses the reaction 3-methyl-2-oxobutanoate + (6R)-5,10-methylene-5,6,7,8-tetrahydrofolate + H2O = 2-dehydropantoate + (6S)-5,6,7,8-tetrahydrofolate. The protein operates within cofactor biosynthesis; (R)-pantothenate biosynthesis; (R)-pantoate from 3-methyl-2-oxobutanoate: step 1/2. Functionally, catalyzes the reversible reaction in which hydroxymethyl group from 5,10-methylenetetrahydrofolate is transferred onto alpha-ketoisovalerate to form ketopantoate. In Mycobacterium avium (strain 104), this protein is 3-methyl-2-oxobutanoate hydroxymethyltransferase.